We begin with the raw amino-acid sequence, 365 residues long: Cyclin-D5-2 (365 aa).

The protein belongs to the cyclin family. Cyclin D subfamily.

The polypeptide is Cyclin-D5-2 (CYCD5-2) (Oryza sativa subsp. japonica (Rice)).